Reading from the N-terminus, the 2300-residue chain is MKGHQFKSWIFELREILREIKNSHYFLDSWTQFTSVGSFIHIFFHQERFIKLFDPRIWSILLSRNSQGSTSNRYFTIKGVVLFVVAVLIYRINNRNMVERKNLYLTGLLPIPMNSIGPRNDTLEESFGSSNINRLIVSLLYLPKGKKISESCFLDPKESTWVLPITKKCIMPESNWGSRWWRNWIGKKRDSSCKISNETVAGIEISFKEKDIKYLEFLFVYYMDDPIHKDHDWELFDRLSPRKRRNIINLNSGQLFEILVKHWICYLMSAFREKIPIEVEGFFKQQGAGSTIQSNDIEHVSHLFSRNKWAISLQNCAQFHMWQFRQDLFVSWGKNPHESDFLRNVSRENWIWLDNVWLVNKDRFFSKVRNVSSNIQYDSTRSSFVQVTDSSQLKGSSDQSRDHFDSISNEDSKYHTLINQREIQQLKERSILWDPSFLQTERTEIESDRFPKCLSGYSSMSMSRLFTEREKQMIIHLLPEEIEEFLGNPTRSIRSFFSDRWSELHLGSNPIERSTRDQKLLKKQQDVSFVPSRRSENKEMVNIFKIITYLQNTVSIHPISSDPGCDMVPKDEPDMDSSNKISFLNKNPFFDLFHLFHDRNRGGYTLHHDFESEERFQEMADRFTLSITEPDLVYHKGFAFSIDSYGLDQKQFLNEVFNSRDESNKKSLLVLPPSFYEENESFYRRIRKKWVRISCGNDLEDPKPKIVVFASNNIMEAVNQYILIRNLIQIQYSTYGYIRNVLNRFFLMNRSDRNFEYGIQRDQIGNDTLNHRTIMKYTINQHLSNLKKSQKKWFDPLIFISRTERSMNRDPHAYRYKWSNGSKNFQEHLEHFVSEQKSRFQVVFDRLRINQYSIDWSEVIDKKDLSKSLRFFLSKSLLFLSKLLLFLSNSLPFFFVSFGNIPIHRSEIHIYELKGPNDQLCNQLLESIGLQIIHLKKWKLFLLDDHDTSQKSKFLINGGTISPFLFNKIPKWMIDSFHSRNNRRKSFDNTDSYFSMISHDQDNWLNPVKPFHRSSLISSFYKANRLRFLNNPHRFCFYCNKRFPFYVEKARINNSDFTYGQFLNILFIRKKIFSLCGGKKKHAFLERDTISPIESQVSNIFIPNDFPQSGDETYNLYKSFHFPIRSNPFVRRAIYSIADISGTPLTEGQIVNFERTYCQPLSDMNLSDSEGKNLHQYLNFNSNMGLIHTPCSEKYLPSEKRKKRSLCIKKCVEKGQMYRTFQRDSAFSTLSKWNLFQTYMPWFLTSTGYKYLNLIFLDTFSDLLPILSSSPKFVSIFHDIMYGSDISWRILQKKLCLPQRNLISEISSKCLHNLLLSEEMIHRNNESPLISTHLRSPNVREFLYSILFLLLVAGYLVRTHLLFVSRASSELQTEFEKVKSLMIPSYMIELRKLLDRYPTSELNSFWLKNLFLVALEQLGDSLEEIRGSASGGNMLLGGGPAYGVKSIRSKKKYLNINLIDIIDLISIIPNPINRITFSRNTRCLSHTSKEIYSLIRKRKNVNGDWIDDKIESWVANSDSIDDEEREFLVQFSTLTTEKRIDQILLSLTHSDHLSKNDSGYQMIEQPGAIYLRYLVDIHKKYLMNYEFNTSCLAERRIFLAHYQTITYSQTSCGANSFHFPSHGKPFSLRLALSPSRGILVIGSIGTGRSYLVKYLATNSYVPFITVFLNKFLDNKPKGFLFDDIDIDDSDDIDASDDIDASDDIDASDDIDRDLDTELELLTMMNALTMDMMPEIDRFYITLQFELAKAMSPCIIWIPNIHDLDVNESNYLSLGLLVNYLSRDCERCSTRNILVIASTHIPQKVDPALIAPNKLNTCIKIRRLLIPQQRKHFFTLSYTRGFHLEKKMFHTNGFGSITMGSNARDLVALTNEALSISITQKKSIIDTNAIRSALHRQTWDLRSQVRSVQDHGILFYQIGRAVAQNVLLSNCPIDPISIYMKKKSCNEGDSYLYKWYFELGTSMKKLTILLYLLSCSAGSVAQDLWSLPGPDEKNGITSYGLVENDSDLVHGLLEVEGALVGSSRTEKDCSQFDNDRVTLLLRPEPRNPLDMMQNGSCSIVDQRFLYEKYESEFEEGAGEGALDPQQIEEDLFNHIVWAPRIWRPWGFLFDCIERTNELGFPYWARSFRGKRIIYDEEDELQENDSEFLQSGTMQYQTRDRSSKEQGFFRISQFIWDPADPLFFLFKDQPFVSVFSHREFFADEEMSKGLLTSQTDPPTSIYKRWFIKNTQEKHFELLIHRQRWLRTNSSLSNGSFRSNTPSESYQYLSNLFLSNARLLDQMTKTLLRKRWLFPDEMKIGFM.

1642-1649 (GSIGTGRS) contacts ATP.

This sequence belongs to the Ycf2 family.

It localises to the plastid. The protein localises to the chloroplast stroma. Probable ATPase of unknown function. Its presence in a non-photosynthetic plant (Epifagus virginiana) and experiments in tobacco indicate that it has an essential function which is probably not related to photosynthesis. The chain is Protein Ycf2 from Vitis vinifera (Grape).